Here is a 341-residue protein sequence, read N- to C-terminus: N-acetyl-gamma-glutamyl-phosphate reductase (341 aa).

Cys147 is a catalytic residue.

The protein belongs to the NAGSA dehydrogenase family. Type 1 subfamily.

Its subcellular location is the cytoplasm. It catalyses the reaction N-acetyl-L-glutamate 5-semialdehyde + phosphate + NADP(+) = N-acetyl-L-glutamyl 5-phosphate + NADPH + H(+). The protein operates within amino-acid biosynthesis; L-arginine biosynthesis; N(2)-acetyl-L-ornithine from L-glutamate: step 3/4. Its function is as follows. Catalyzes the NADPH-dependent reduction of N-acetyl-5-glutamyl phosphate to yield N-acetyl-L-glutamate 5-semialdehyde. In Dehalococcoides mccartyi (strain ATCC BAA-2100 / JCM 16839 / KCTC 5957 / BAV1), this protein is N-acetyl-gamma-glutamyl-phosphate reductase.